The following is a 286-amino-acid chain: Plasma membrane ascorbate-dependent reductase CYBRD1 (286 aa).

Topologically, residues 1–7 (MAMEGYR) are cytoplasmic. Residues 8–32 (GFLGLLVSALLVGFLSVIFVLIWVL) form a helical membrane-spanning segment. The Cytochrome b561 domain maps to 15–220 (SALLVGFLSV…FGALIFWIVT (206 aa)). Over 33–47 (HFREGLGWDGGALEF) the chain is Extracellular. A helical membrane pass occupies residues 48–69 (NWHPVLAVTGFVFIQGIAIIVY). Positions 50, 70, and 79 each coordinate heme b. At 70 to 78 (RLPWTWKCS) the chain is on the cytoplasmic side. Positions 79 and 83 each coordinate L-ascorbate. A helical transmembrane segment spans residues 79–105 (KFLMKSIHAGLNAVAAILAIISVVAVF). Residue H86 coordinates heme b. At 106–118 (DYHNVRKIPHMYS) the chain is on the extracellular side. H108 contacts Fe(3+). Residues 115–118 (HMYS) and H120 contribute to the heme b site. The chain crosses the membrane as a helical span at residues 119 to 144 (LHSWVGLTVLILYIQQLVVGFFIFLL). At 145–151 (PWAPPSL) the chain is on the cytoplasmic side. Residue R152 participates in L-ascorbate binding. Residues 152–179 (RAIVMPIHVYSGLLLFGTVIATVLMGVT) traverse the membrane as a helical segment. Positions 159 and 180 each coordinate heme b. Over 180–197 (EKLFFVLKNPSYHSFPPE) the chain is Extracellular. A helical membrane pass occupies residues 198–222 (GVFTNTLGLLILVFGALIFWIVTRP). Residues 223 to 286 (QWKRPREPGS…LVDTGQRSTM (64 aa)) are Cytoplasmic-facing. A heme b-binding site is contributed by K225. Position 232 is a phosphoserine (S232). T285 carries the phosphothreonine modification.

In terms of assembly, homodimer. The cofactor is heme b. As to expression, highly expressed in all regions of the small intestine and colon studied in suckling animals. However, after weaning, when iron absorption declines significantly, strong expression is retained only in the duodenum. Also expressed in respiratory epithelium.

Its subcellular location is the cell membrane. The protein resides in the apical cell membrane. It carries out the reaction Fe(3+)(out) + L-ascorbate(in) = monodehydro-L-ascorbate radical(in) + Fe(2+)(out) + H(+). The catalysed reaction is Cu(2+)(out) + L-ascorbate(in) = Cu(+)(out) + monodehydro-L-ascorbate radical(in) + H(+). It catalyses the reaction monodehydro-L-ascorbate radical(out) + L-ascorbate(in) = monodehydro-L-ascorbate radical(in) + L-ascorbate(out). In terms of biological role, plasma membrane reductase that uses cytoplasmic ascorbate as an electron donor to reduce extracellular Fe(3+) into Fe(2+). Probably functions in dietary iron absorption at the brush border of duodenal enterocytes by producing Fe(2+), the divalent form of iron that can be transported into enterocytes. It is also able to reduce extracellular monodehydro-L-ascorbate and may be involved in extracellular ascorbate regeneration by erythrocytes in blood. May also act as a ferrireductase in airway epithelial cells. May also function as a cupric transmembrane reductase. The sequence is that of Plasma membrane ascorbate-dependent reductase CYBRD1 from Rattus norvegicus (Rat).